The sequence spans 847 residues: Lethal(3)malignant brain tumor-like protein 1 (847 aa).

Basic and acidic residues-rich tracts occupy residues 65-82 and 144-155; these read FPRE…EKGV and AVKEGHAKKDGD. 3 disordered regions span residues 65–87, 142–163, and 237–296; these read FPRE…SEPI, AEAV…PTSR, and VKKR…SEEK. 3 MBT repeats span residues 300 to 400, 408 to 507, and 516 to 611; these read WSWA…LQPP, FSWT…LTPP, and FIWE…LQPP. The interaction with monomethylated and dimethylated peptides stretch occupies residues 473–480; the sequence is FDNWDDTY. A CCHHC-type zinc finger spans residues 639–682; that stretch reads SKYSFHHRKCPTPGCDGSGHVTGRFTAHYCLSGCPLAEKNQGKL. 4 residues coordinate Zn(2+): Cys-648, Cys-653, His-666, and Cys-672. The 65-residue stretch at 778-842 folds into the SAM domain; that stretch reads WTIDEVFSFV…YNAILMFKNA (65 aa).

In terms of assembly, homodimer.

It is found in the nucleus. Polycomb group (PcG) protein that specifically recognizes and binds mono- and dimethyllysine residues on target proteins, thereby acting as a 'reader' of a network of post-translational modifications. PcG proteins maintain the transcriptionally repressive state of genes: acts as a chromatin compaction factor by recognizing and binding mono- and dimethylated histone H1b/H1-4 at 'Lys-26' (H1bK26me1 and H1bK26me2) and histone H4 at 'Lys-20' (H4K20me1 and H4K20me2), leading to condense chromatin and repress transcription. The protein is Lethal(3)malignant brain tumor-like protein 1 (L3MBTL1) of Gallus gallus (Chicken).